Consider the following 709-residue polypeptide: Protein transport protein SEC39 (709 aa).

Belongs to the SEC39 family. Component of a peripheral membrane protein complex consisting of DSL1, SEC39/DSL3 and TIP20. Bound to a SNARE complex consisting of UFE1, USE1, SEC20 and SEC22 or YKT6 through direct interaction of TIP20 with SEC20. Interacts with TIP20 and DSL1.

The protein localises to the endoplasmic reticulum membrane. Functionally, required for protein transport between the Golgi and the endoplasmic reticulum. May contribute to tethering of coatomer-coated retrograde transport vesicles to the ER membrane through interaction with and stabilization of the SNARE complex. This is Protein transport protein SEC39 from Saccharomyces cerevisiae (strain ATCC 204508 / S288c) (Baker's yeast).